Reading from the N-terminus, the 432-residue chain is MTKDFKISVSAALISALFSSPYAFAEEPEDGNDGIPRLSAVQISPNVDPKLGVGLYPAKPILRQENPKLPPRGPQGPEKKRARLAEAIQPQVLGGLDARAKGIHSIAIGATAEAAKPAAVAVGAGSIATGVNSVAIGPLSKALGDSAVTYGASSTAQKDGVAIGARASASDTGVAVGFNSKVDAQNSVAIGHSSHVAADHGYSIAIGDLSKTDRENSVSIGHESLNRQLTHLAAGTKDNDAVNVAQLKKEMAETLENARKETLAQSNDVLDAAKKHSNSVARTTLETAEEHANKKSAEALVSAKVYADSNSSHTLKTANSYTDVTVSSSTKKAISESNQYTDHKFSQLDNRLDKLDKRVDKGLASSAALNSLFQPYGVGKVNFTAGVGGYRSSQALAIGSGYRVNESVALKAGVAYAGSSNVMYNASFNIEW.

The signal sequence occupies residues methionine 1–alanine 25. The surface exposed passenger domain stretch occupies residues glutamate 26 to tyrosine 340. Residues valine 242–leucine 263 adopt a coiled-coil conformation. Residues threonine 341–glycine 379 form an outer membrane translocation of the passenger domain region. A run of 4 beta stranded transmembrane segments spans residues glycine 379 to glycine 389, serine 393 to valine 404, lysine 411 to alanine 417, and asparagine 421 to tryptophan 432. The tract at residues lysine 380–tryptophan 432 is translocator domain.

This sequence belongs to the autotransporter-2 (AT-2) (TC 1.B.40) family. Homotrimer.

The protein resides in the cell surface. It localises to the cell outer membrane. In terms of biological role, collagen-binding outer membrane protein forming a fibrillar matrix on the bacterial cell surface. Promotes attachment to eukaryotic cells and after invasion, is the major adhesin in infected tissue. Constitutes an alternative uptake pathway under conditions in which invasin synthesis is repressed. This chain is Adhesin YadA (yadA), found in Yersinia pseudotuberculosis serotype I (strain IP32953).